The sequence spans 115 residues: Large ribosomal subunit protein uL22 (115 aa).

This sequence belongs to the universal ribosomal protein uL22 family. In terms of assembly, part of the 50S ribosomal subunit.

Its function is as follows. This protein binds specifically to 23S rRNA; its binding is stimulated by other ribosomal proteins, e.g. L4, L17, and L20. It is important during the early stages of 50S assembly. It makes multiple contacts with different domains of the 23S rRNA in the assembled 50S subunit and ribosome. Functionally, the globular domain of the protein is located near the polypeptide exit tunnel on the outside of the subunit, while an extended beta-hairpin is found that lines the wall of the exit tunnel in the center of the 70S ribosome. The polypeptide is Large ribosomal subunit protein uL22 (Streptomyces avermitilis (strain ATCC 31267 / DSM 46492 / JCM 5070 / NBRC 14893 / NCIMB 12804 / NRRL 8165 / MA-4680)).